The chain runs to 238 residues: 1-(5-phosphoribosyl)-5-[(5-phosphoribosylamino)methylideneamino] imidazole-4-carboxamide isomerase (238 aa).

Catalysis depends on aspartate 8, which acts as the Proton acceptor. Residue aspartate 129 is the Proton donor of the active site.

This sequence belongs to the HisA/HisF family.

The protein localises to the cytoplasm. The enzyme catalyses 1-(5-phospho-beta-D-ribosyl)-5-[(5-phospho-beta-D-ribosylamino)methylideneamino]imidazole-4-carboxamide = 5-[(5-phospho-1-deoxy-D-ribulos-1-ylimino)methylamino]-1-(5-phospho-beta-D-ribosyl)imidazole-4-carboxamide. The protein operates within amino-acid biosynthesis; L-histidine biosynthesis; L-histidine from 5-phospho-alpha-D-ribose 1-diphosphate: step 4/9. The sequence is that of 1-(5-phosphoribosyl)-5-[(5-phosphoribosylamino)methylideneamino] imidazole-4-carboxamide isomerase from Lacticaseibacillus paracasei (strain ATCC 334 / BCRC 17002 / CCUG 31169 / CIP 107868 / KCTC 3260 / NRRL B-441) (Lactobacillus paracasei).